We begin with the raw amino-acid sequence, 143 residues long: MGKPNGLKTARKLRNHRRVQRWNDKLYKKAHFGTALKANPFGGASHASGIVVSRLGIEAKQPNSAIRKCVRVQLKKNGKKITAFVPNDGCLNYIQENDKVLVAGLGRSGHSVGDIPGVRFKVVKVSSVSLIAIYRGIKDKPNV.

Pro-62 bears the Hydroxyproline mark.

This sequence belongs to the universal ribosomal protein uS12 family.

The chain is Small ribosomal subunit protein uS12 (rps23) from Dictyostelium discoideum (Social amoeba).